We begin with the raw amino-acid sequence, 73 residues long: Kappa-scoloptoxin(03)-Ssm1c (73 aa).

A signal peptide spans 1-23; it reads MKSWMAILLVMALIIFTLDNCYS. Disulfide bonds link Cys-32-Cys-58, Cys-41-Cys-57, and Cys-44-Cys-67.

This sequence belongs to the scoloptoxin family. As to expression, expressed by the venom gland.

The protein resides in the secreted. Its function is as follows. Inhibits voltage-gated potassium channels. The chain is Kappa-scoloptoxin(03)-Ssm1c from Scolopendra mutilans (Chinese red-headed centipede).